The chain runs to 217 residues: Flagellin B1 (217 aa).

Residues 1 to 12 (MKVFEFLKGKRG) constitute a propeptide that is removed on maturation.

Belongs to the archaeal flagellin family.

The protein localises to the archaeal flagellum. In terms of biological role, flagellin is the subunit protein which polymerizes to form the filaments of archaeal flagella. The chain is Flagellin B1 (flaB1) from Methanocaldococcus jannaschii (strain ATCC 43067 / DSM 2661 / JAL-1 / JCM 10045 / NBRC 100440) (Methanococcus jannaschii).